Here is a 121-residue protein sequence, read N- to C-terminus: SLLEFGMMILEETGKLAVPFYSSYGCYCGWGGKGTPKDATDRCCFVHDCCYGNLPDCTPKPDRYKYKRVNGAIVCEQGTSCENRICECDKAAAICFTKNLNTYSKIYMLYPDFLCKGELKC.

7 disulfides stabilise this stretch: Cys-26-Cys-115, Cys-28-Cys-44, Cys-43-Cys-95, Cys-49-Cys-121, Cys-50-Cys-88, Cys-57-Cys-81, and Cys-75-Cys-86. Positions 27, 29, and 31 each coordinate Ca(2+). His-47 is an active-site residue. Asp-48 contacts Ca(2+). Asp-89 is a catalytic residue.

The protein belongs to the phospholipase A2 family. Group II subfamily. D49 sub-subfamily. As to quaternary structure, monomer. It depends on Ca(2+) as a cofactor. As to expression, expressed by the venom gland.

It localises to the secreted. It carries out the reaction a 1,2-diacyl-sn-glycero-3-phosphocholine + H2O = a 1-acyl-sn-glycero-3-phosphocholine + a fatty acid + H(+). In terms of biological role, snake venom phospholipase A2 (PLA2) that has a low enzymatic activity. PLA2 catalyzes the calcium-dependent hydrolysis of the 2-acyl groups in 3-sn-phosphoglycerides. In Daboia russelii (Russel's viper), this protein is Basic phospholipase A2 VRV-PL-V.